Consider the following 364-residue polypeptide: Autophagy-related protein 5 (364 aa).

Over residues 1 to 13 the composition is skewed to polar residues; that stretch reads MASPNPYSYSPQL. A disordered region spans residues 1-103; it reads MASPNPYSYS…SLPPKPKPSS (103 aa). A compositionally biased stretch (low complexity) spans 28 to 42; that stretch reads SSPSFRSTPFRSSRG. A compositionally biased stretch (gly residues) spans 43 to 53; the sequence is TGAGTGIGLGL. Residues 72–82 show a composition bias toward basic and acidic residues; the sequence is RSGDGSHDDLP. K202 participates in a covalent cross-link: Glycyl lysine isopeptide (Lys-Gly) (interchain with G-Cter in ATG12). Residues 262-306 are disordered; sequence PSSPSPPSSDQQQPQRPGGSSSSGSYRVMQTLVPPRGPNNRTPQT. Low complexity predominate over residues 269–286; that stretch reads SSDQQQPQRPGGSSSSGS.

The protein belongs to the ATG5 family. As to quaternary structure, conjugated with atg12. Post-translationally, conjugated to atg12; which is essential for autophagy.

The protein localises to the preautophagosomal structure membrane. Its function is as follows. Involved in cytoplasm to vacuole transport (Cvt) and autophagic vesicle formation. Autophagy is essential for maintenance of amino acid levels and protein synthesis under nitrogen starvation. Required for selective autophagic degradation of the nucleus (nucleophagy). Also required for mitophagy, which eliminates defective or superfluous mitochondria in order to fulfill cellular energy requirements and prevent excess ROS production. Conjugation with atg12, through a ubiquitin-like conjugating system involving apg-5/atg7 as an E1-like activating enzyme and atg10 as an E2-like conjugating enzyme, is essential for its function. The atg12-apg-4/atg5 conjugate acts as an E3-like enzyme which is required for lipidation of apg-6/atg8 and apg-6/atg8 association to the vesicle membranes. The sequence is that of Autophagy-related protein 5 (apg-4) from Neurospora crassa (strain ATCC 24698 / 74-OR23-1A / CBS 708.71 / DSM 1257 / FGSC 987).